The sequence spans 157 residues: Eukaryotic translation initiation factor 5A-1 (157 aa).

Residue Lys52 is modified to Hypusine. Ser75 and Ser77 each carry phosphoserine. Position 78 is a phosphothreonine (Thr78).

This sequence belongs to the eIF-5A family. Lys-52 undergoes hypusination, a unique post-translational modification that consists in the addition of a butylamino group from spermidine to lysine side chain, leading to the formation of the unusual amino acid hypusine. eIF-5As are the only known proteins to undergo this modification, which is essential for their function.

It is found in the cytoplasm. In terms of biological role, translation factor that promotes translation elongation and termination, particularly upon ribosome stalling at specific amino acid sequence contexts. Binds between the exit (E) and peptidyl (P) site of the ribosome and promotes rescue of stalled ribosome: specifically required for efficient translation of polyproline-containing peptides as well as other motifs that stall the ribosome. Acts as a ribosome quality control (RQC) cofactor by joining the RQC complex to facilitate peptidyl transfer during CAT tailing step. The polypeptide is Eukaryotic translation initiation factor 5A-1 (tif51a) (Schizosaccharomyces pombe (strain 972 / ATCC 24843) (Fission yeast)).